The primary structure comprises 147 residues: Cyanate hydratase (147 aa).

Active-site residues include R88, E91, and S114.

It belongs to the cyanase family.

It catalyses the reaction cyanate + hydrogencarbonate + 3 H(+) = NH4(+) + 2 CO2. Its function is as follows. Catalyzes the reaction of cyanate with bicarbonate to produce ammonia and carbon dioxide. This chain is Cyanate hydratase, found in Methylobacillus flagellatus (strain ATCC 51484 / DSM 6875 / VKM B-1610 / KT).